We begin with the raw amino-acid sequence, 340 residues long: Toxin coregulated pilus biosynthesis protein E (340 aa).

A run of 3 helical transmembrane segments spans residues 108-131, 146-161, and 312-333; these read AISS…GYSV, WPGV…FSLY, and NISL…FSLV.

This sequence belongs to the GSP F family.

The protein resides in the cell inner membrane. Probably involved in cholera toxin receptor (GM1) interaction in order to bring the cells within close proximity of the ganglioside for efficient toxin delivery. The protein is Toxin coregulated pilus biosynthesis protein E (tcpE) of Vibrio cholerae serotype O1 (strain ATCC 39315 / El Tor Inaba N16961).